The following is a 178-amino-acid chain: MHSSALLCCLVLLTGVRASPGQGTQSENSCTRFPGNLPHMLRDLRDAFSRVKTFFQMKDQLDNILLKESLLEDFKGYLGCQALSEMIQFYLEEVMPQAENHDPDIKEHVNSLGENLKTLRLRLRRCHRFLPCENKSKAVEQVKNAFSKLQEKGVYKAMSEFDIFINYIEAYMTMKIRN.

The first 18 residues, Met-1–Ala-18, serve as a signal peptide directing secretion. 2 disulfide bridges follow: Cys-30–Cys-126 and Cys-80–Cys-132. Asn-134 is a glycosylation site (N-linked (GlcNAc...) asparagine).

Belongs to the IL-10 family. In terms of assembly, homodimer. Interacts with IL10RA and IL10RB.

Its subcellular location is the secreted. In terms of biological role, major immune regulatory cytokine that acts on many cells of the immune system where it has profound anti-inflammatory functions, limiting excessive tissue disruption caused by inflammation. Mechanistically, IL10 binds to its heterotetrameric receptor comprising IL10RA and IL10RB leading to JAK1 and STAT2-mediated phosphorylation of STAT3. In turn, STAT3 translocates to the nucleus where it drives expression of anti-inflammatory mediators. Targets antigen-presenting cells (APCs) such as macrophages and monocytes and inhibits their release of pro-inflammatory cytokines including granulocyte-macrophage colony-stimulating factor /GM-CSF, granulocyte colony-stimulating factor/G-CSF, IL-1 alpha, IL-1 beta, IL-6, IL-8 and TNF-alpha. Also interferes with antigen presentation by reducing the expression of MHC-class II and co-stimulatory molecules, thereby inhibiting their ability to induce T cell activation. In addition, controls the inflammatory response of macrophages by reprogramming essential metabolic pathways including mTOR signaling. This is Interleukin-10 (IL10) from Macaca fascicularis (Crab-eating macaque).